Here is a 167-residue protein sequence, read N- to C-terminus: uncharacterized protein (167 aa).

It is found in the mitochondrion. This is an uncharacterized protein from Marchantia polymorpha (Common liverwort).